An 83-amino-acid chain; its full sequence is U1-theraphotoxin-Hs1f (83 aa).

The signal sequence occupies residues 1 to 21; that stretch reads MKVTLIAILTCAAVLVLHTTA. Positions 22-48 are excised as a propeptide; sequence AEELEESQLMEVGMPDTELAAVDEERL. 3 cysteine pairs are disulfide-bonded: cysteine 51-cysteine 64, cysteine 55-cysteine 75, and cysteine 69-cysteine 80.

This sequence belongs to the neurotoxin 12 (Hwtx-2) family. 02 (Hwtx-2) subfamily. In terms of tissue distribution, expressed by the venom gland.

Its subcellular location is the secreted. Lethal neurotoxin that blocks neuromuscular transmission. This chain is U1-theraphotoxin-Hs1f, found in Cyriopagopus schmidti (Chinese bird spider).